Here is a 441-residue protein sequence, read N- to C-terminus: Maltokinase (441 aa).

The protein belongs to the aminoglycoside phosphotransferase family. Monomer.

The enzyme catalyses D-maltose + ATP = alpha-maltose 1-phosphate + ADP + H(+). It functions in the pathway glycan biosynthesis; glycogen biosynthesis. Catalyzes the ATP-dependent phosphorylation of maltose to maltose 1-phosphate. Is involved in a branched alpha-glucan biosynthetic pathway from trehalose, together with TreS, GlgE and GlgB. The chain is Maltokinase (mak) from Mycolicibacterium vanbaalenii (strain DSM 7251 / JCM 13017 / BCRC 16820 / KCTC 9966 / NRRL B-24157 / PYR-1) (Mycobacterium vanbaalenii).